We begin with the raw amino-acid sequence, 236 residues long: MATPHINAKDGAFAETVLMPGDPLRAKYIAETYLENAELVTDVRNMFGYTGFYKGQRVSVMGHGMGIPSCSIYTKELITEYGVKNIIRIGSCGAVRPDVKVRDVIIGMGACTDSKVNRMRFKDHDFAAIADFGLLRKAVTAAETLGIPVKVGNLFSADLFYSPDPQMFDVMEKFGILGVEMEAAGIYGVAAEYGANALAICTVSDHIKTGEQTSADERQNTFDDMMKIALDSVLLK.

A purine D-ribonucleoside is bound at residue His-5. Residues Gly-21, Arg-25, Arg-44, and 88–91 (RIGS) contribute to the phosphate site. A purine D-ribonucleoside contacts are provided by residues 180–182 (EME) and 204–205 (SD). The active-site Proton donor is the Asp-205.

The protein belongs to the PNP/UDP phosphorylase family. Homohexamer; trimer of homodimers.

The catalysed reaction is a purine D-ribonucleoside + phosphate = a purine nucleobase + alpha-D-ribose 1-phosphate. It carries out the reaction a purine 2'-deoxy-D-ribonucleoside + phosphate = a purine nucleobase + 2-deoxy-alpha-D-ribose 1-phosphate. Its function is as follows. Catalyzes the reversible phosphorolytic breakdown of the N-glycosidic bond in the beta-(deoxy)ribonucleoside molecules, with the formation of the corresponding free purine bases and pentose-1-phosphate. The chain is Purine nucleoside phosphorylase DeoD-type from Tolumonas auensis (strain DSM 9187 / NBRC 110442 / TA 4).